The primary structure comprises 337 residues: Protein RETICULATA-RELATED 3, chloroplastic (337 aa).

The N-terminal 59 residues, 1–59 (MAAMAAKLQLSAKSDQSSVRLPRVINLSRDPTTRVSFPRNGSVCSLHTNFSSPHLAKPC), are a transit peptide targeting the chloroplast. Positions 70 to 89 (NNGGGSGSGGGGGGFGGSGG) are enriched in gly residues. A disordered region spans residues 70 to 96 (NNGGGSGSGGGGGGFGGSGGEASEESS). 2 helical membrane passes run 151–171 (FVFS…YMLA) and 216–236 (VFAS…NGLI).

Belongs to the RETICULATA family. Expressed in root meristem, root vasculature, distal region of young leaf primordia, leaf bundle sheath cells, hydathodes and pollen grains.

It is found in the plastid. The protein localises to the chloroplast membrane. Its function is as follows. May play a role in leaf development. Required for leaf mesophyll cell division in the early stages of leaf organogenesis. This chain is Protein RETICULATA-RELATED 3, chloroplastic, found in Arabidopsis thaliana (Mouse-ear cress).